The sequence spans 904 residues: Translation initiation factor IF-2 (904 aa).

The segment at 239-316 (QAATQAKTSE…DDGQGSFQAP (78 aa)) is disordered. Basic and acidic residues predominate over residues 248–278 (EGAEKGTLHKKPETPGKKGDKGGRAADDGKK). The tr-type G domain maps to 404-571 (HRAPVVTVMG…QVLLQAEILE (168 aa)). Residues 413 to 420 (GHVDHGKT) are G1. 413 to 420 (GHVDHGKT) contacts GTP. The segment at 438-442 (GITQH) is G2. A G3 region spans residues 459 to 462 (DTPG). Residues 459–463 (DTPGH) and 513–516 (NKID) each bind GTP. The G4 stretch occupies residues 513–516 (NKID). A G5 region spans residues 549 to 551 (SAK).

This sequence belongs to the TRAFAC class translation factor GTPase superfamily. Classic translation factor GTPase family. IF-2 subfamily.

Its subcellular location is the cytoplasm. Its function is as follows. One of the essential components for the initiation of protein synthesis. Protects formylmethionyl-tRNA from spontaneous hydrolysis and promotes its binding to the 30S ribosomal subunits. Also involved in the hydrolysis of GTP during the formation of the 70S ribosomal complex. This Dechloromonas aromatica (strain RCB) protein is Translation initiation factor IF-2.